A 428-amino-acid polypeptide reads, in one-letter code: 3-phosphoshikimate 1-carboxyvinyltransferase (428 aa).

Positions 19, 20, and 24 each coordinate 3-phosphoshikimate. Position 19 (Lys-19) interacts with phosphoenolpyruvate. 2 residues coordinate phosphoenolpyruvate: Gly-91 and Arg-119. 3-phosphoshikimate contacts are provided by Ser-164, Gln-166, Asp-312, and Lys-339. Gln-166 lines the phosphoenolpyruvate pocket. Residue Asp-312 is the Proton acceptor of the active site. 2 residues coordinate phosphoenolpyruvate: Arg-343 and Arg-386.

Belongs to the EPSP synthase family. As to quaternary structure, monomer.

Its subcellular location is the cytoplasm. It catalyses the reaction 3-phosphoshikimate + phosphoenolpyruvate = 5-O-(1-carboxyvinyl)-3-phosphoshikimate + phosphate. It functions in the pathway metabolic intermediate biosynthesis; chorismate biosynthesis; chorismate from D-erythrose 4-phosphate and phosphoenolpyruvate: step 6/7. In terms of biological role, catalyzes the transfer of the enolpyruvyl moiety of phosphoenolpyruvate (PEP) to the 5-hydroxyl of shikimate-3-phosphate (S3P) to produce enolpyruvyl shikimate-3-phosphate and inorganic phosphate. This chain is 3-phosphoshikimate 1-carboxyvinyltransferase, found in Bacillus licheniformis (strain ATCC 14580 / DSM 13 / JCM 2505 / CCUG 7422 / NBRC 12200 / NCIMB 9375 / NCTC 10341 / NRRL NRS-1264 / Gibson 46).